The sequence spans 1460 residues: ABC transporter C family member 5 (1460 aa).

2 disordered regions span residues Met-1–Glu-23 and Gly-37–Asn-68. A compositionally biased stretch (low complexity) spans Gly-37–Ser-55. The next 5 membrane-spanning stretches (helical) occupy residues Phe-196–Phe-216, Leu-238–Tyr-258, Leu-320–Trp-340, Leu-425–Tyr-445, and Ile-456–Gly-476. The 287-residue stretch at Phe-196–Gln-482 folds into the ABC transmembrane type-1 1 domain. The interval Ile-537 to Lys-567 is disordered. The segment covering Ser-551 to Asn-563 has biased composition (polar residues). Positions Asn-560–Leu-783 constitute an ABC transporter 1 domain. An ATP-binding site is contributed by Gly-593–Ser-600. A run of 4 helical transmembrane segments spans residues Met-842–Ile-862, Ala-922–Val-942, Ile-1014–Ile-1034, and Trp-1108–Ile-1128. In terms of domain architecture, ABC transmembrane type-1 2 spans Phe-853–Thr-1166. Residues Ile-1210–Asp-1444 enclose the ABC transporter 2 domain. Position 1244–1251 (Gly-1244–Ser-1251) interacts with ATP.

Belongs to the ABC transporter superfamily. ABCC family. Conjugate transporter (TC 3.A.1.208) subfamily.

The protein localises to the membrane. The protein is ABC transporter C family member 5 (abcC5) of Dictyostelium discoideum (Social amoeba).